The primary structure comprises 550 residues: Arginine--tRNA ligase (550 aa).

Residues 130 to 140 (ANPTGPIHIGG) carry the 'HIGH' region motif.

The protein belongs to the class-I aminoacyl-tRNA synthetase family. In terms of assembly, monomer.

The protein localises to the cytoplasm. The enzyme catalyses tRNA(Arg) + L-arginine + ATP = L-arginyl-tRNA(Arg) + AMP + diphosphate. The sequence is that of Arginine--tRNA ligase from Mycobacterium sp. (strain JLS).